We begin with the raw amino-acid sequence, 445 residues long: MASKLKTFINLRDYPITLFNQIRSLSSRILTPINQSHYRKRILLANLLQRYGFPPSSLQHFLSRNNHLLNSDLVETEISLGILLSLKIPQKSLVSLISDCPNVLRSEFLRKWRVPLSNCGKHGVVSSSAIKSVLEHSSRIGIGPDKFNECVRVLKSLGFCDSTVSRILSSFPGVLLVNEIEIRRKIEFLVGIGIARDNIERFFHVFPEVLGIGTETRLKPLLDEFMKMGFSKDDVKKEIAREPRVLGLELGELPRCLELINTLKCREVIRVSIISEGAFRAGFEVKLRVDCLCKYGLIRRDAFKVVWKEPRVILYEIEDIEKKIEFLTNRMGFHINCLADVPEYLGVNLQKQIVPRYNVIDYLKLKGGLGCDIGLKGLIKPSMKRFYNLYVMPYPECERIFGKRKENVRVNKRHPAGLWKLMKPPSNLTTKEDVQNMKSFIESLA.

The N-terminal 25 residues, 1–25 (MASKLKTFINLRDYPITLFNQIRSL), are a transit peptide targeting the mitochondrion.

It belongs to the mTERF family.

It localises to the mitochondrion. Functionally, transcription termination factor required for mitochondrial NAD2 intron 3 splicing and normal membrane respiratory chain Complex I activity. Essential for normal plant growth and development. Binds to RNA but not to double-stranded DNA. This chain is Transcription termination factor MTERF15, mitochondrial, found in Arabidopsis thaliana (Mouse-ear cress).